Reading from the N-terminus, the 82-residue chain is Small ribosomal subunit protein bS16 (82 aa).

The protein belongs to the bacterial ribosomal protein bS16 family.

The sequence is that of Small ribosomal subunit protein bS16 from Marinomonas sp. (strain MWYL1).